A 92-amino-acid polypeptide reads, in one-letter code: Co-chaperonin GroES (92 aa).

The protein belongs to the GroES chaperonin family. In terms of assembly, heptamer of 7 subunits arranged in a ring. Interacts with the chaperonin GroEL.

It localises to the cytoplasm. Its function is as follows. Together with the chaperonin GroEL, plays an essential role in assisting protein folding. The GroEL-GroES system forms a nano-cage that allows encapsulation of the non-native substrate proteins and provides a physical environment optimized to promote and accelerate protein folding. GroES binds to the apical surface of the GroEL ring, thereby capping the opening of the GroEL channel. The protein is Co-chaperonin GroES of Thermotoga neapolitana.